We begin with the raw amino-acid sequence, 261 residues long: uncharacterized protein (261 aa).

A disordered region spans residues 1 to 22; sequence MAETTEPPSDAGTSQADAMALA. A helical transmembrane segment spans residues 107–127; it reads IAMAAAVVIICGFTGLSGYIV.

The protein to M.tuberculosis Rv1362c.

It localises to the membrane. This is an uncharacterized protein from Mycobacterium tuberculosis (strain ATCC 25618 / H37Rv).